We begin with the raw amino-acid sequence, 152 residues long: Endoribonuclease YbeY (152 aa).

Zn(2+) contacts are provided by His116, His120, and His126.

The protein belongs to the endoribonuclease YbeY family. Requires Zn(2+) as cofactor.

The protein localises to the cytoplasm. In terms of biological role, single strand-specific metallo-endoribonuclease involved in late-stage 70S ribosome quality control and in maturation of the 3' terminus of the 16S rRNA. The protein is Endoribonuclease YbeY of Mycoplasma mobile (strain ATCC 43663 / 163K / NCTC 11711) (Mesomycoplasma mobile).